Here is a 364-residue protein sequence, read N- to C-terminus: Uroporphyrinogen decarboxylase (364 aa).

Substrate contacts are provided by residues 49–53, Asp98, Tyr173, Ser228, and His341; that span reads RQAGR.

This sequence belongs to the uroporphyrinogen decarboxylase family. Homodimer.

The protein localises to the cytoplasm. The enzyme catalyses uroporphyrinogen III + 4 H(+) = coproporphyrinogen III + 4 CO2. Its pathway is porphyrin-containing compound metabolism; protoporphyrin-IX biosynthesis; coproporphyrinogen-III from 5-aminolevulinate: step 4/4. Catalyzes the decarboxylation of four acetate groups of uroporphyrinogen-III to yield coproporphyrinogen-III. The polypeptide is Uroporphyrinogen decarboxylase (Protochlamydia amoebophila (strain UWE25)).